A 377-amino-acid chain; its full sequence is Histidinol-phosphate aminotransferase (377 aa).

The residue at position 232 (lysine 232) is an N6-(pyridoxal phosphate)lysine.

The protein belongs to the class-II pyridoxal-phosphate-dependent aminotransferase family. Histidinol-phosphate aminotransferase subfamily. Homodimer. It depends on pyridoxal 5'-phosphate as a cofactor.

The catalysed reaction is L-histidinol phosphate + 2-oxoglutarate = 3-(imidazol-4-yl)-2-oxopropyl phosphate + L-glutamate. The protein operates within amino-acid biosynthesis; L-histidine biosynthesis; L-histidine from 5-phospho-alpha-D-ribose 1-diphosphate: step 7/9. The polypeptide is Histidinol-phosphate aminotransferase (Mycobacterium sp. (strain KMS)).